A 418-amino-acid polypeptide reads, in one-letter code: Phosphoglycerate kinase (418 aa).

Substrate is bound by residues 18–20 (DFN), Arg-34, 57–60 (HLGR), Arg-115, and Arg-171. ATP-binding positions include Lys-224, Gly-315, Glu-346, and 375 to 378 (GGDS).

The protein belongs to the phosphoglycerate kinase family. As to quaternary structure, monomer.

It localises to the cytoplasm. The catalysed reaction is (2R)-3-phosphoglycerate + ATP = (2R)-3-phospho-glyceroyl phosphate + ADP. The protein operates within carbohydrate degradation; glycolysis; pyruvate from D-glyceraldehyde 3-phosphate: step 2/5. In Porphyromonas gingivalis (strain ATCC BAA-308 / W83), this protein is Phosphoglycerate kinase.